The primary structure comprises 1313 residues: Inactive protein tyrosine kinase pTKL (1313 aa).

2 MORN repeats span residues 20 to 42 (YAGDLNVDNLPHGRGLMLYENGN) and 45 to 63 (FGHFINGKKHGKGIYIDKN). N-linked (GlcNAc...) asparagine glycosylation is found at asparagine 63, asparagine 131, asparagine 178, asparagine 208, asparagine 254, asparagine 260, and asparagine 288. The 66-residue stretch at 300 to 365 (WNKEQVAQWL…LQLIKNLRVT (66 aa)) folds into the SAM domain. Residues asparagine 466, asparagine 516, asparagine 525, asparagine 528, and asparagine 534 are each glycosylated (N-linked (GlcNAc...) asparagine). Residues 569-580 (EPIKPNKEKEEN) are compositionally biased toward basic and acidic residues. The segment at 569–631 (EPIKPNKEKE…SEKSSETSSE (63 aa)) is disordered. Residues 586–604 (PIINSKNETNLLNDSNPTK) are compositionally biased toward polar residues. N-linked (GlcNAc...) asparagine glycans are attached at residues asparagine 592, asparagine 598, asparagine 661, asparagine 678, asparagine 729, asparagine 735, and asparagine 749. Position 782 (lysine 782) interacts with ATP. 5 N-linked (GlcNAc...) asparagine glycosylation sites follow: asparagine 790, asparagine 868, asparagine 940, asparagine 983, and asparagine 1000. The Protein kinase domain maps to 962–1294 (FRNKNNILCG…FDRILIEISM (333 aa)). Residues 1052–1055 (KILF) carry the RVxF motif motif. 2 N-linked (GlcNAc...) asparagine glycosylation sites follow: asparagine 1191 and asparagine 1198.

It belongs to the protein kinase superfamily. TKL Ser/Thr protein kinase family.

It is found in the parasitophorous vacuole. The protein resides in the host cell membrane. The protein localises to the host cytoplasm. Its subcellular location is the host cytoskeleton. This Plasmodium berghei (strain Anka) protein is Inactive protein tyrosine kinase pTKL.